The sequence spans 538 residues: Zinc finger protein 155 (538 aa).

Positions 8–78 (VTFKDVAVVF…GTATQREGNS (71 aa)) constitute a KRAB domain. C2H2-type zinc fingers lie at residues 176-198 (YTCD…QRVH), 204-226 (FMCD…QRVH), 232-254 (FKCE…RKLH), 260-282 (YICE…KRIH), 288-310 (FKCD…SMVH), 316-338 (FRCD…CMVH), 344-366 (YRCE…QVVH), 372-394 (YNCK…QRVH), 400-422 (FKCE…QRSH), 428-450 (YKCE…QRVH), and 456-478 (YNCK…KRLH). The C2H2-type 12; degenerate zinc-finger motif lies at 484–506 (FKCEDCGKRLVHRTYRKDQPRDY).

This sequence belongs to the krueppel C2H2-type zinc-finger protein family.

Its subcellular location is the nucleus. In terms of biological role, may be involved in transcriptional regulation. The polypeptide is Zinc finger protein 155 (ZNF155) (Homo sapiens (Human)).